Reading from the N-terminus, the 492-residue chain is Solute carrier family 2, facilitated glucose transporter member 1 (492 aa).

Met1 bears the N-acetylmethionine mark. At 1–11 the chain is on the cytoplasmic side; it reads MDPSSKKVTGR. A helical transmembrane segment spans residues 12–33; that stretch reads LMLAVGGAVLGSLQFGYNTGVI. At 34–66 the chain is on the extracellular side; sequence NAPQKVIEEFYNQTWNHRYGEPIPSTTLTTLWS. N-linked (GlcNAc...) asparagine glycosylation is present at Asn45. The chain crosses the membrane as a helical span at residues 67-87; the sequence is LSVAIFSVGGMIGSFSVGLFV. Residues 88-90 are Cytoplasmic-facing; sequence NRF. The helical transmembrane segment at 91–112 threads the bilayer; it reads GRRNSMLMMNLLAFVAAVLMGF. The Extracellular portion of the chain corresponds to 113 to 120; that stretch reads SKLGKSFE. A helical transmembrane segment spans residues 121 to 144; it reads MLILGRFIIGVYCGLTTGFVPMYV. The Cytoplasmic segment spans residues 145–155; the sequence is GEVSPTALRGA. A helical transmembrane segment spans residues 156–176; the sequence is LGTLHQLGIVVGILIAQVFGL. Position 161 (Gln161) interacts with D-glucose. Residues 177–185 are Extracellular-facing; sequence DSIMGNADL. Residues 186–206 form a helical membrane-spanning segment; that stretch reads WPLLLSVIFIPALLQCILLPF. Over 207 to 271 the chain is Cytoplasmic; it reads CPESPRFLLI…LFRSPAYRQP (65 aa). Ser226 bears the Phosphoserine mark. Residues 272 to 293 traverse the membrane as a helical segment; it reads ILIAVVLQLSQQLSGINAVFYY. D-glucose-binding positions include 282 to 283 and Asn288; that span reads QQ. At 294 to 306 the chain is on the extracellular side; sequence STSIFEKAGVQQP. The chain crosses the membrane as a helical span at residues 307–328; that stretch reads VYATIGSGIVNTAFTVVSLFVV. Asn317 provides a ligand contact to D-glucose. The Cytoplasmic segment spans residues 329–334; it reads ERAGRR. Residues 335–355 form a helical membrane-spanning segment; sequence TLHLIGLAGMAGCAVLMTIAL. Topologically, residues 356-365 are extracellular; sequence ALLERLPWMS. A helical transmembrane segment spans residues 366-388; that stretch reads YLSIVAIFGFVAFFEVGPGPIPW. Glu380 and Trp388 together coordinate D-glucose. The Cytoplasmic portion of the chain corresponds to 389–401; the sequence is FIVAELFSQGPRP. Residues 402–422 traverse the membrane as a helical segment; that stretch reads AAIAVAGFSNWTSNFIVGMCF. Residues 423–429 lie on the Extracellular side of the membrane; it reads QYVEQLC. Residues 430-450 traverse the membrane as a helical segment; the sequence is GPYVFIIFTVLLVLFFIFTYF. Residues 451–492 are Cytoplasmic-facing; it reads KVPETKGRTFDEIASGFRQGGASQSDKTPEELFHPLGADSQV. Ser465 carries the post-translational modification Phosphoserine. The tract at residues 468–492 is disordered; that stretch reads RQGGASQSDKTPEELFHPLGADSQV. Phosphothreonine is present on Thr478. Ser490 is subject to Phosphoserine.

It belongs to the major facilitator superfamily. Sugar transporter (TC 2.A.1.1) family. Glucose transporter subfamily. Found in a complex with ADD2, DMTN and SLC2A1. Interacts (via C-terminus cytoplasmic region) with DMTN isoform 2. Interacts with SNX27; the interaction is required when endocytosed to prevent degradation in lysosomes and promote recycling to the plasma membrane. Interacts with GIPC (via PDZ domain). Interacts with STOM. Interacts with SGTA (via Gln-rich region). Interacts with isoform 1 of BSG. Interacts with SMIM43; the interaction may promote SLC2A1-mediated glucose transport to meet the energy needs of mesendoderm differentiation. Phosphorylation at Ser-226 by PKC promotes glucose uptake by increasing cell membrane localization. As to expression, retina (at protein level).

Its subcellular location is the cell membrane. It is found in the photoreceptor inner segment. It carries out the reaction D-glucose(out) = D-glucose(in). The uptake of glucose is inhibited by cytochalasin B. Glucose uptake is increased in response to phorbol ester 12-O-tetradecanoylphorbol-13-acetate (TPA) treatment: TPA-induced glucose uptake requires phosphorylation at Ser-226. Facilitative glucose transporter, which is responsible for constitutive or basal glucose uptake. Has a very broad substrate specificity; can transport a wide range of aldoses including both pentoses and hexoses. Most important energy carrier of the brain: present at the blood-brain barrier and assures the energy-independent, facilitative transport of glucose into the brain. In association with BSG and NXNL1, promotes retinal cone survival by increasing glucose uptake into photoreceptors. Required for mesendoderm differentiation. The sequence is that of Solute carrier family 2, facilitated glucose transporter member 1 from Mus musculus (Mouse).